Here is a 355-residue protein sequence, read N- to C-terminus: Chemerin-like receptor 2 (355 aa).

Residues 1–41 (MEDLEETLFEEFENYSYALDYYSLESDLEEKVQLGVVHWVS) are Extracellular-facing. N-linked (GlcNAc...) asparagine glycosylation occurs at asparagine 14. A helical transmembrane segment spans residues 42 to 62 (LVLYCLSFVLGIPGNAIVIWF). Over 63–73 (TGFKWKKTVST) the chain is Cytoplasmic. A helical membrane pass occupies residues 74-94 (LWFLNLAIADFIFLLFLPLYI). The Extracellular segment spans residues 95-112 (SYVVMNFHWPFGIWLCKA). Cysteine 110 and cysteine 187 form a disulfide bridge. A helical transmembrane segment spans residues 113-133 (NSFTAQLNMFASVFFLTVISL). Topologically, residues 134–154 (DHYIHLIHPVLSHRHRTLKNS) are cytoplasmic. Residues 155-175 (LIVIIFIWLLASLIGGPALYF) form a helical membrane-spanning segment. Residues 176–210 (RDTVEFNNHTLCYNNFQKHDPDLTVIRHHVLTWVK) lie on the Extracellular side of the membrane. A helical transmembrane segment spans residues 211 to 231 (FIVGYLFPLLTMSICYLCLIF). The Cytoplasmic portion of the chain corresponds to 232–247 (KVKKRSILISSRHFWT). Residues 248-268 (ILAVVVAFVVCWTPYHLFSIW) form a helical membrane-spanning segment. The Extracellular portion of the chain corresponds to 269-286 (ELTIHHNSYSHHVMQAGI). Residues 287-307 (PLSTGLAFLNSCLNPILYVLI) traverse the membrane as a helical segment. Residues 308 to 355 (SKKFQARFRSSVAEILKYTLWEVSCSGTVSEQLRNSETKNLCLLETAQ) lie on the Cytoplasmic side of the membrane.

It belongs to the chemokine-like receptor (CMKLR) family.

The protein localises to the cell membrane. In terms of biological role, receptor for chemoattractant adipokine chemerin/RARRES2 suggesting a role for this receptor in the regulation of inflammation and energy homesotasis. Signals mainly via beta-arrestin pathway. Binding of RARRES2 activates weakly G proteins, calcium mobilization and MAPK1/MAPK3 (ERK1/2) phosphorylation too. Acts also as a receptor for TAFA1, mediates its effects on neuronal stem-cell proliferation and differentiation via the activation of ROCK/ERK and ROCK/STAT3 signaling pathway. The chain is Chemerin-like receptor 2 (CMKLR2) from Macaca mulatta (Rhesus macaque).